Consider the following 464-residue polypeptide: tRNA(Ile2) 2-agmatinylcytidine synthetase TiaS (464 aa).

The protein belongs to the TiaS family.

It localises to the cytoplasm. The enzyme catalyses cytidine(34) in tRNA(Ile2) + agmatine + ATP + H2O = 2-agmatinylcytidine(34) in tRNA(Ile2) + AMP + 2 phosphate + 2 H(+). In terms of biological role, ATP-dependent agmatine transferase that catalyzes the formation of 2-agmatinylcytidine (agm2C) at the wobble position (C34) of tRNA(Ile2), converting the codon specificity from AUG to AUA. The sequence is that of tRNA(Ile2) 2-agmatinylcytidine synthetase TiaS from Ignisphaera aggregans (strain DSM 17230 / JCM 13409 / AQ1.S1).